The primary structure comprises 335 residues: Probable tRNA N6-adenosine threonylcarbamoyltransferase (335 aa).

A divalent metal cation-binding residues include histidine 109, histidine 113, and tyrosine 130. Substrate is bound by residues 130–134, aspartate 162, glycine 177, glutamate 181, and asparagine 266; that span reads YVSGG. Aspartate 294 serves as a coordination point for a divalent metal cation.

The protein belongs to the KAE1 / TsaD family. In terms of assembly, component of the EKC/KEOPS complex; the whole complex dimerizes. It depends on a divalent metal cation as a cofactor.

It is found in the cytoplasm. The protein resides in the nucleus. The catalysed reaction is L-threonylcarbamoyladenylate + adenosine(37) in tRNA = N(6)-L-threonylcarbamoyladenosine(37) in tRNA + AMP + H(+). In terms of biological role, component of the EKC/KEOPS complex that is required for the formation of a threonylcarbamoyl group on adenosine at position 37 (t(6)A37) in tRNAs that read codons beginning with adenine. The complex is probably involved in the transfer of the threonylcarbamoyl moiety of threonylcarbamoyl-AMP (TC-AMP) to the N6 group of A37. Osgep likely plays a direct catalytic role in this reaction, but requires other protein(s) of the complex to fulfill this activity. The chain is Probable tRNA N6-adenosine threonylcarbamoyltransferase from Nematostella vectensis (Starlet sea anemone).